Consider the following 139-residue polypeptide: Large ribosomal subunit protein uL22c (139 aa).

This sequence belongs to the universal ribosomal protein uL22 family. Part of the 50S ribosomal subunit.

It localises to the plastid. It is found in the chloroplast. Its function is as follows. This protein binds specifically to 23S rRNA. The globular domain of the protein is located near the polypeptide exit tunnel on the outside of the subunit, while an extended beta-hairpin is found that lines the wall of the exit tunnel in the center of the 70S ribosome. This is Large ribosomal subunit protein uL22c (rpl22) from Cycas taitungensis (Prince sago).